The chain runs to 202 residues: Large ribosomal subunit protein bL25 (202 aa).

The protein belongs to the bacterial ribosomal protein bL25 family. CTC subfamily. As to quaternary structure, part of the 50S ribosomal subunit; part of the 5S rRNA/L5/L18/L25 subcomplex. Contacts the 5S rRNA. Binds to the 5S rRNA independently of L5 and L18.

In terms of biological role, this is one of the proteins that binds to the 5S RNA in the ribosome where it forms part of the central protuberance. This Paramagnetospirillum magneticum (strain ATCC 700264 / AMB-1) (Magnetospirillum magneticum) protein is Large ribosomal subunit protein bL25.